A 318-amino-acid polypeptide reads, in one-letter code: Methionyl-tRNA formyltransferase (318 aa).

110–113 is a (6S)-5,6,7,8-tetrahydrofolate binding site; sequence SLLP.

It belongs to the Fmt family.

The catalysed reaction is L-methionyl-tRNA(fMet) + (6R)-10-formyltetrahydrofolate = N-formyl-L-methionyl-tRNA(fMet) + (6S)-5,6,7,8-tetrahydrofolate + H(+). Functionally, attaches a formyl group to the free amino group of methionyl-tRNA(fMet). The formyl group appears to play a dual role in the initiator identity of N-formylmethionyl-tRNA by promoting its recognition by IF2 and preventing the misappropriation of this tRNA by the elongation apparatus. The protein is Methionyl-tRNA formyltransferase of Lacticaseibacillus paracasei (strain ATCC 334 / BCRC 17002 / CCUG 31169 / CIP 107868 / KCTC 3260 / NRRL B-441) (Lactobacillus paracasei).